A 401-amino-acid polypeptide reads, in one-letter code: Elongation factor Tu (401 aa).

The tr-type G domain occupies lysine 10–lysine 211. The tract at residues glycine 19–threonine 26 is G1. GTP is bound at residue glycine 19 to threonine 26. Residue threonine 26 participates in Mg(2+) binding. The tract at residues glycine 62–alanine 66 is G2. Residues aspartate 83–glycine 86 form a G3 region. GTP-binding positions include aspartate 83–histidine 87 and asparagine 138–aspartate 141. Positions asparagine 138 to aspartate 141 are G4. Residues serine 179–valine 181 form a G5 region.

The protein belongs to the TRAFAC class translation factor GTPase superfamily. Classic translation factor GTPase family. EF-Tu/EF-1A subfamily. In terms of assembly, monomer.

The protein localises to the cytoplasm. The enzyme catalyses GTP + H2O = GDP + phosphate + H(+). In terms of biological role, GTP hydrolase that promotes the GTP-dependent binding of aminoacyl-tRNA to the A-site of ribosomes during protein biosynthesis. The sequence is that of Elongation factor Tu from Leptospira interrogans serogroup Icterohaemorrhagiae serovar copenhageni (strain Fiocruz L1-130).